The primary structure comprises 336 residues: Inositol 2-dehydrogenase (336 aa).

This sequence belongs to the Gfo/Idh/MocA family. As to quaternary structure, homotetramer.

It carries out the reaction myo-inositol + NAD(+) = scyllo-inosose + NADH + H(+). Its function is as follows. Involved in the oxidation of myo-inositol (MI) to 2-keto-myo-inositol (2KMI or 2-inosose). The polypeptide is Inositol 2-dehydrogenase (Pseudomonas savastanoi pv. phaseolicola (strain 1448A / Race 6) (Pseudomonas syringae pv. phaseolicola (strain 1448A / Race 6))).